Consider the following 357-residue polypeptide: Protein Wnt-8c (357 aa).

The first 16 residues, 1-16 (MRGSTFLLLSIVGIYG), serve as a signal peptide directing secretion. A disulfide bridge connects residues cysteine 55 and cysteine 66. An N-linked (GlcNAc...) asparagine glycan is attached at asparagine 104. Disulfide bonds link cysteine 105–cysteine 113, cysteine 115–cysteine 133, cysteine 181–cysteine 195, cysteine 183–cysteine 190, cysteine 260–cysteine 298, cysteine 276–cysteine 291, cysteine 313–cysteine 328, cysteine 315–cysteine 325, and cysteine 320–cysteine 321. The O-palmitoleoyl serine moiety is linked to residue serine 187. 2 N-linked (GlcNAc...) asparagine glycosylation sites follow: asparagine 263 and asparagine 282. Asparagine 346 carries an N-linked (GlcNAc...) asparagine glycan.

This sequence belongs to the Wnt family. In terms of processing, palmitoleoylation is required for efficient binding to frizzled receptors. Depalmitoleoylation leads to Wnt signaling pathway inhibition. Proteolytic processing by tiki1 and tiki2 promotes oxidation and formation of large disulfide-bond oligomers, leading to inactivation of wnt8c. In terms of tissue distribution, cells that form rhombomere 4. Hensen node and the neural plate immediately anterior to it.

The protein localises to the secreted. The protein resides in the extracellular space. Its subcellular location is the extracellular matrix. Its function is as follows. Ligand for members of the frizzled family of seven transmembrane receptors. Probable developmental protein. Is likely to signal over only few cell diameters. May be involved in the regulation of axis formation and in the rhombomere specification. The protein is Protein Wnt-8c (WNT8C) of Gallus gallus (Chicken).